A 222-amino-acid chain; its full sequence is Small ribosomal subunit protein eS1 (222 aa).

This sequence belongs to the eukaryotic ribosomal protein eS1 family.

The protein is Small ribosomal subunit protein eS1 of Pyrobaculum islandicum (strain DSM 4184 / JCM 9189 / GEO3).